The following is a 176-amino-acid chain: Peroxiredoxin AHP1 (176 aa).

The residue at position 2 (S2) is an N-acetylserine. The Thioredoxin domain maps to 9-176 (FPAGDYKFQY…SSVESVLAHL (168 aa)). At S28 the chain carries Phosphoserine. K32 participates in a covalent cross-link: Glycyl lysine isopeptide (Lys-Gly) (interchain with G-Cter in URM1). A Glycyl lysine isopeptide (Lys-Gly) (interchain with G-Cter in ubiquitin); alternate cross-link involves residue K48. A Glycyl lysine isopeptide (Lys-Gly) (interchain with G-Cter in URM1); alternate cross-link involves residue K48. The residue at position 59 (S59) is a Phosphoserine. C62 acts as the Cysteine sulfenic acid (-SOH) intermediate in catalysis. A Cysteine persulfide modification is found at C62. K79 is covalently cross-linked (Glycyl lysine isopeptide (Lys-Gly) (interchain with G-Cter in URM1)). A Glycyl lysine isopeptide (Lys-Gly) (interchain with G-Cter in ubiquitin); alternate cross-link involves residue K81. Residue K81 forms a Glycyl lysine isopeptide (Lys-Gly) (interchain with G-Cter in URM1); alternate linkage. A Glycyl lysine isopeptide (Lys-Gly) (interchain with G-Cter in URM1) cross-link involves residue K107. A Glycyl lysine isopeptide (Lys-Gly) (interchain with G-Cter in ubiquitin) cross-link involves residue K113. S116 carries the post-translational modification Phosphoserine. C120 carries the cysteine persulfide modification. Residue K124 forms a Glycyl lysine isopeptide (Lys-Gly) (interchain with G-Cter in URM1) linkage. K156 is covalently cross-linked (Glycyl lysine isopeptide (Lys-Gly) (interchain with G-Cter in URM1); alternate). A Glycyl lysine isopeptide (Lys-Gly) (interchain with G-Cter in SUMO); alternate cross-link involves residue K156.

It belongs to the peroxiredoxin family. Prx5 subfamily. As to quaternary structure, homodimer; disulfide-linked, upon oxidation. Conjugated to URM1, a ubiquitin-like protein, in response to oxidative stresses. The attachment of URM1 to lysine residues exclusively depends on the presence of a peroxidatic cysteine in the target protein, with low specificity for the particular residue, motif, or structural context at which urmylation can occur. The URM1-conjugation reaction is mechanistically and directly coupled to the process of cysteine persulfidation, transfering the sulfur atom of the URM1 thiocarboxyl group to redox-active cysteine residues in the target protein if it is exposed to oxidative conditions. In terms of processing, persulfidated on specific redox-active cysteine residues. Persulfidation (also called protein S-sulfhydration) may provide a molecular mechanism that enables cells to protect vulnerable cysteine residues from reactive oxygen species (ROS) under stress conditions.

It is found in the cytoplasm. The catalysed reaction is a hydroperoxide + [thioredoxin]-dithiol = an alcohol + [thioredoxin]-disulfide + H2O. Thiol-specific peroxidase that catalyzes the reduction of hydrogen peroxide and organic hydroperoxides to water and alcohols, respectively. Plays a role in cell protection against oxidative stress by detoxifying peroxides and as sensor of hydrogen peroxide-mediated signaling events. Preferentially eliminates organic peroxides rather than hydrogen peroxide. Relays alkyl hydroperoxides as a signal to the transcription factor CAD1/YAP2 by inducing the formation of intramolecular disulfide bonds in CAD1, which causes its nuclear accumulation and activation. Involved in cellular Mn(2+) homeostasis. This chain is Peroxiredoxin AHP1, found in Saccharomyces cerevisiae (strain ATCC 204508 / S288c) (Baker's yeast).